The following is a 326-amino-acid chain: Peroxidase 43 (326 aa).

An N-terminal signal peptide occupies residues 1–24 (MVWANAKMRLALSLVTVFFGISLA). 4 cysteine pairs are disulfide-bonded: Cys35–Cys112, Cys68–Cys73, Cys118–Cys322, and Cys196–Cys228. Catalysis depends on His66, which acts as the Proton acceptor. Asp67, Val70, Gly72, Asp74, and Ser76 together coordinate Ca(2+). N-linked (GlcNAc...) asparagine glycosylation is present at Asn151. Position 159 (Pro159) interacts with substrate. His189 is a heme b binding site. Thr190 contacts Ca(2+). Ca(2+) contacts are provided by Asp241, Ser244, and Asp249.

The protein belongs to the peroxidase family. Classical plant (class III) peroxidase subfamily. Requires heme b as cofactor. Ca(2+) is required as a cofactor.

The protein resides in the secreted. The enzyme catalyses 2 a phenolic donor + H2O2 = 2 a phenolic radical donor + 2 H2O. Its function is as follows. Removal of H(2)O(2), oxidation of toxic reductants, biosynthesis and degradation of lignin, suberization, auxin catabolism, response to environmental stresses such as wounding, pathogen attack and oxidative stress. These functions might be dependent on each isozyme/isoform in each plant tissue. The polypeptide is Peroxidase 43 (PER43) (Arabidopsis thaliana (Mouse-ear cress)).